We begin with the raw amino-acid sequence, 391 residues long: tRNA-specific 2-thiouridylase MnmA (391 aa).

ATP is bound by residues 9 to 16 (GMSGGVDS) and methionine 35. An interaction with target base in tRNA region spans residues 95–97 (NPD). Cysteine 100 functions as the Nucleophile in the catalytic mechanism. Cysteine 100 and cysteine 196 are joined by a disulfide. Residue glycine 124 coordinates ATP. The interval 146 to 148 (KDQ) is interaction with tRNA. Residue cysteine 196 is the Cysteine persulfide intermediate of the active site. The tract at residues 308–309 (RY) is interaction with tRNA. Residues 372–382 (TGQPGQATSTG) show a composition bias toward polar residues. A disordered region spans residues 372 to 391 (TGQPGQATSTGHAPALAEAR).

The protein belongs to the MnmA/TRMU family.

The protein resides in the cytoplasm. It carries out the reaction S-sulfanyl-L-cysteinyl-[protein] + uridine(34) in tRNA + AH2 + ATP = 2-thiouridine(34) in tRNA + L-cysteinyl-[protein] + A + AMP + diphosphate + H(+). Its function is as follows. Catalyzes the 2-thiolation of uridine at the wobble position (U34) of tRNA, leading to the formation of s(2)U34. The sequence is that of tRNA-specific 2-thiouridylase MnmA from Burkholderia cenocepacia (strain ATCC BAA-245 / DSM 16553 / LMG 16656 / NCTC 13227 / J2315 / CF5610) (Burkholderia cepacia (strain J2315)).